Reading from the N-terminus, the 110-residue chain is Phosphoribosyl-ATP pyrophosphatase (110 aa).

The protein belongs to the PRA-PH family.

It is found in the cytoplasm. The catalysed reaction is 1-(5-phospho-beta-D-ribosyl)-ATP + H2O = 1-(5-phospho-beta-D-ribosyl)-5'-AMP + diphosphate + H(+). It functions in the pathway amino-acid biosynthesis; L-histidine biosynthesis; L-histidine from 5-phospho-alpha-D-ribose 1-diphosphate: step 2/9. The protein is Phosphoribosyl-ATP pyrophosphatase of Pseudomonas fluorescens (strain SBW25).